Reading from the N-terminus, the 170-residue chain is Transcriptional repressor NrdR (170 aa).

The segment at 3 to 34 is a zinc-finger region; it reads CPFCRHPDSRVVDSRTTDDGTSIRRRRQCPDC. In terms of domain architecture, ATP-cone spans 46 to 136; the sequence is LMVVKRSGVT…VYRAFDSLED (91 aa). The disordered stretch occupies residues 148 to 170; that stretch reads RPSAEDRGSGETLEVPAPAIAAD.

Belongs to the NrdR family. It depends on Zn(2+) as a cofactor.

In terms of biological role, negatively regulates transcription of bacterial ribonucleotide reductase nrd genes and operons by binding to NrdR-boxes. This Streptomyces griseus subsp. griseus (strain JCM 4626 / CBS 651.72 / NBRC 13350 / KCC S-0626 / ISP 5235) protein is Transcriptional repressor NrdR.